The following is an 84-amino-acid chain: Large ribosomal subunit protein eL34 (84 aa).

This sequence belongs to the eukaryotic ribosomal protein eL34 family.

The protein is Large ribosomal subunit protein eL34 of Pyrobaculum calidifontis (strain DSM 21063 / JCM 11548 / VA1).